The chain runs to 548 residues: Viridiflorene synthase (548 aa).

Mg(2+) contacts are provided by aspartate 301, aspartate 305, aspartate 444, threonine 448, and glutamate 452. A DDXXD motif motif is present at residues 301 to 305 (DDTFD).

The protein belongs to the terpene synthase family. Tpsa subfamily. Requires Mg(2+) as cofactor. As to expression, expressed in stem and leaf trichomes. Detected in roots, fruits and flowers.

It is found in the cytoplasm. The catalysed reaction is (2E,6E)-farnesyl diphosphate = viridiflorene + diphosphate. The protein operates within secondary metabolite biosynthesis; terpenoid biosynthesis. Sesquiterpene synthase involved in the production of viridiflorene from (E,E)-farnesyl diphosphate. Can also use (Z,Z)-FPP to make several unidentified sesquiterpenes. This is Viridiflorene synthase from Solanum lycopersicum (Tomato).